Consider the following 246-residue polypeptide: Small ribosomal subunit protein uS2 (246 aa).

Belongs to the universal ribosomal protein uS2 family.

In Dictyoglomus turgidum (strain DSM 6724 / Z-1310), this protein is Small ribosomal subunit protein uS2.